Here is a 207-residue protein sequence, read N- to C-terminus: Acyl-homoserine-lactone synthase (207 aa).

It belongs to the autoinducer synthase family.

The enzyme catalyses a fatty acyl-[ACP] + S-adenosyl-L-methionine = an N-acyl-L-homoserine lactone + S-methyl-5'-thioadenosine + holo-[ACP] + H(+). In terms of biological role, required for the synthesis of N-butanoyl-L-homoserine lactone (BHL), an autoinducer molecule which binds to AsaR. This chain is Acyl-homoserine-lactone synthase (asaI), found in Aeromonas salmonicida.